The following is a 211-amino-acid chain: Ribosomal RNA small subunit methyltransferase G (211 aa).

S-adenosyl-L-methionine-binding positions include G73, 126 to 127 (IE), and R142.

The protein belongs to the methyltransferase superfamily. RNA methyltransferase RsmG family.

The protein localises to the cytoplasm. It carries out the reaction guanosine(527) in 16S rRNA + S-adenosyl-L-methionine = N(7)-methylguanosine(527) in 16S rRNA + S-adenosyl-L-homocysteine. Specifically methylates the N7 position of guanine in position 527 of 16S rRNA. The chain is Ribosomal RNA small subunit methyltransferase G from Methylorubrum extorquens (strain CM4 / NCIMB 13688) (Methylobacterium extorquens).